The primary structure comprises 231 residues: Lipoprotein-releasing system ATP-binding protein LolD (231 aa).

In terms of domain architecture, ABC transporter spans 6-230 (LSCKNVSKKY…DGELELVINS (225 aa)). Residue 42–49 (GLSGSGKT) participates in ATP binding.

The protein belongs to the ABC transporter superfamily. Lipoprotein translocase (TC 3.A.1.125) family. As to quaternary structure, the complex is composed of two ATP-binding proteins (LolD) and two transmembrane proteins (LolC and LolE).

It is found in the cell inner membrane. Part of the ABC transporter complex LolCDE involved in the translocation of mature outer membrane-directed lipoproteins, from the inner membrane to the periplasmic chaperone, LolA. Responsible for the formation of the LolA-lipoprotein complex in an ATP-dependent manner. This chain is Lipoprotein-releasing system ATP-binding protein LolD, found in Francisella tularensis subsp. tularensis (strain FSC 198).